Here is a 475-residue protein sequence, read N- to C-terminus: Ribulose bisphosphate carboxylase large chain (475 aa).

A propeptide spanning residues 1–2 is cleaved from the precursor; that stretch reads MV. P3 is subject to N-acetylproline. K14 is modified (N6,N6,N6-trimethyllysine). 2 residues coordinate substrate: N123 and T173. K175 (proton acceptor) is an active-site residue. K177 contributes to the substrate binding site. Residues K201, D203, and E204 each coordinate Mg(2+). K201 is subject to N6-carboxylysine. Catalysis depends on H294, which acts as the Proton acceptor. Positions 295, 327, and 379 each coordinate substrate.

This sequence belongs to the RuBisCO large chain family. Type I subfamily. Heterohexadecamer of 8 large chains and 8 small chains. The cofactor is Mg(2+).

The protein resides in the plastid. Its subcellular location is the chloroplast. It catalyses the reaction 2 (2R)-3-phosphoglycerate + 2 H(+) = D-ribulose 1,5-bisphosphate + CO2 + H2O. The catalysed reaction is D-ribulose 1,5-bisphosphate + O2 = 2-phosphoglycolate + (2R)-3-phosphoglycerate + 2 H(+). Its function is as follows. RuBisCO catalyzes two reactions: the carboxylation of D-ribulose 1,5-bisphosphate, the primary event in carbon dioxide fixation, as well as the oxidative fragmentation of the pentose substrate in the photorespiration process. Both reactions occur simultaneously and in competition at the same active site. The sequence is that of Ribulose bisphosphate carboxylase large chain from Dunaliella tertiolecta (Green alga).